The chain runs to 126 residues: Glycine cleavage system H protein (126 aa).

Positions 24–105 (TLTVGITDHA…AYGVWLFKLK (82 aa)) constitute a Lipoyl-binding domain. An N6-lipoyllysine modification is found at K65.

Belongs to the GcvH family. In terms of assembly, the glycine cleavage system is composed of four proteins: P, T, L and H. (R)-lipoate is required as a cofactor.

Its function is as follows. The glycine cleavage system catalyzes the degradation of glycine. The H protein shuttles the methylamine group of glycine from the P protein to the T protein. This Burkholderia vietnamiensis (strain G4 / LMG 22486) (Burkholderia cepacia (strain R1808)) protein is Glycine cleavage system H protein.